Here is a 410-residue protein sequence, read N- to C-terminus: Histidine--tRNA ligase (410 aa).

It belongs to the class-II aminoacyl-tRNA synthetase family.

Its subcellular location is the cytoplasm. It catalyses the reaction tRNA(His) + L-histidine + ATP = L-histidyl-tRNA(His) + AMP + diphosphate + H(+). The protein is Histidine--tRNA ligase of Methanoregula boonei (strain DSM 21154 / JCM 14090 / 6A8).